A 452-amino-acid polypeptide reads, in one-letter code: Probable hexaprenyl pyrophosphate synthase, mitochondrial (452 aa).

3 residues coordinate isopentenyl diphosphate: Lys108, Arg111, and His204. Mg(2+)-binding residues include Asp211 and Asp215. Arg220 lines the an all-trans-polyprenyl diphosphate pocket. Arg221 contributes to the isopentenyl diphosphate binding site. Residues Lys303, Thr304, Gln341, and Lys358 each contribute to the an all-trans-polyprenyl diphosphate site.

The protein belongs to the FPP/GGPP synthase family. The cofactor is Mg(2+).

The protein resides in the mitochondrion. It participates in cofactor biosynthesis; ubiquinone biosynthesis. In terms of biological role, assembly of polyisoprenoid side chains. The polyprenyl synthase of coenzyme Q biosynthesis catalyzes the formation from isopentenyl diphosphate of all trans-polyprenyl pyrophosphates generally ranging in length of between 6 and 10 isoprene units depending on the species. In Yarrowia lipolytica (strain CLIB 122 / E 150) (Yeast), this protein is Probable hexaprenyl pyrophosphate synthase, mitochondrial (COQ1).